A 248-amino-acid chain; its full sequence is UDP-2,3-diacylglucosamine hydrolase (248 aa).

5 residues coordinate Mn(2+): aspartate 7, histidine 9, aspartate 40, asparagine 78, and histidine 113. 78-79 (NR) is a substrate binding site. The substrate site is built by aspartate 121, serine 159, threonine 163, lysine 166, and histidine 194. Residues histidine 194 and histidine 196 each contribute to the Mn(2+) site.

Belongs to the LpxH family. Requires Mn(2+) as cofactor.

It localises to the cell inner membrane. The catalysed reaction is UDP-2-N,3-O-bis[(3R)-3-hydroxytetradecanoyl]-alpha-D-glucosamine + H2O = 2-N,3-O-bis[(3R)-3-hydroxytetradecanoyl]-alpha-D-glucosaminyl 1-phosphate + UMP + 2 H(+). It functions in the pathway glycolipid biosynthesis; lipid IV(A) biosynthesis; lipid IV(A) from (3R)-3-hydroxytetradecanoyl-[acyl-carrier-protein] and UDP-N-acetyl-alpha-D-glucosamine: step 4/6. Its function is as follows. Hydrolyzes the pyrophosphate bond of UDP-2,3-diacylglucosamine to yield 2,3-diacylglucosamine 1-phosphate (lipid X) and UMP by catalyzing the attack of water at the alpha-P atom. Involved in the biosynthesis of lipid A, a phosphorylated glycolipid that anchors the lipopolysaccharide to the outer membrane of the cell. This is UDP-2,3-diacylglucosamine hydrolase from Pseudomonas syringae pv. syringae (strain B728a).